The sequence spans 1755 residues: MESQQLSQHSHISHGSACASVTSKEVHTNQDPLDVSASKTEECEKASTKANSQQTTTPASSAVPENPHHASPQTAQSHSPQNGPYPQQCMMTQNQANPSGWSFYGHPSMIPYTPYQMSPMYFPPGPQSQFPQYPSSVGTPLSTPSPESGNTFTDSSSADSDMTSTKKYVRPPPMLTSPNDFPNWVKTYIKFLQNSNLGGIIPTVNGKPVRQITDDELTFLYNTFQIFAPSQFLPTWVKDILSVDYTDIMKILSKSIEKMQSDTQEANDIVTLANLQYNGSTPADAFETKVTNIIDRLNNNGIHINNKVACQLIMRGLSGEYKFLRYTRHRHLNMTVAELFLDIHAIYEEQQGSRNSKPNYRRNLSDEKNDSRSYTNTTKPKVIARNPQKTNNSKSKTARAHNVSTSNNSPSTDNDSISKSTTEPIQLNNKHDLHLGQELTESTVNHTNHSDDELPGHLLLDSGASRTLIRSAHHIHSASSNPDINVVDAQKRNIPINAIGDLQFHFQDNTKTSIKVLHTPNIAYDLLSLNELAAVDITACFTKNVLERSDGTVLAPIVQYGDFYWVSKRYLLPSNISVPTINNVHTSESTRKYPYPFIHRMLAHANAQTIRYSLKNNTITYFNESDVDWSSAIDYQCPDCLIGKSTKHRHIKGSRLKYQNSYEPFQYLHTDIFGPVHNLPKSAPSYFISFTDETTKFRWVYPLHDRREDSILDVFTTILAFIKNQFQASVLVIQMDRGSEYTNRTLHKFLEKNGITPCYTTTADSRAHGVAERLNRTLLDDCRTQLQCSGLPNHLWFSAIEFSTIVRNSLASPKSKKSARQHAGLAGLDISTLLPFGQPVIVNDHNPNSKIHPRGIPGYALHPSRNSYGYIIYLPSLKKTVDTTNYVILQGKESRLDQFNYDALTFDEDLNRLTASYHSFIASNEIQESNDLNIESDHDFQSDIELHPEQPRNVLSKAVSPTDSTPPSTHTEDSKRVSKTNIRAPREVDPNISESNILPSKKRSSTPQISNIESTGSGGMHKLNVPLLAPMSQSNTHESSHASKSKDFRHSDSYSENETNHTNVPISSTGGTNNKTVPQISDQETEKRIIHRSPSIDASPPENNSSHNIVPIKTPTTVSEQNTEESIIADLPLPDLPPESPTEFPDPFKELPPINSRQTNSSLGGIGDSNAYTTINSKKRSLEDNETEIKVSRDTWNTKNMRSLEPPRSKKRIHLIAAVKAVKSIKPIRTTLRYDEAITYNKDIKEKEKYIEAYHKEVNQLLKMKTWDTDEYYDRKEIDPKRVINSMFIFNKKRDGTHKARFVARGDIQHPDTYDSGMQSNTVHHYALMTSLSLALDNNYYITQLDISSAYLYADIKEELYIRPPPHLGMNDKLIRLKKSLYGLKQSGANWYETIKSYLIQQCGMEEVRGWSCVFKNSQVTICLFVDDMVLFSKNLNSNKRIIDKLKMQYDTKIINLGESDEEIQYDILGLEIKYQRGKYMKLGMENSLTEKIPKLNVPLNPKGRKLSAPGQPGLYIDQQELELEEDDYKMKVHEMQKLIGLASYVGYKFRFDLLYYINTLAQHILFPSKQVLDMTYELIQFIWNTRDKQLIWHKSKPVKPTNKLVVISDASYGNQPYYKSQIGNIYLLNGKVIGGKSTKASLTCTSTTEAEIHAISESVPLLNNLSYLIQELDKKPITKGLLTDSKSTISIIISNNEEKFRNRFFGTKAMRLRDEVSGNHLHVCYIETKKNIADVMTKPLPIKTFKLLTNKWIH.

Residues 1–16 (MESQQLSQHSHISHGS) are compositionally biased toward low complexity. 3 disordered regions span residues 1–93 (MESQ…MMTQ), 126–173 (PQSQ…RPPP), and 352–421 (GSRN…SKST). Polar residues-rich tracts occupy residues 48 to 60 (TKAN…TPAS), 71 to 93 (SPQT…MMTQ), and 127 to 152 (QSQF…GNTF). Positions 153–165 (TDSSSADSDMTST) are enriched in low complexity. The tract at residues 299 to 401 (NNGIHINNKV…NSKSKTARAH (103 aa)) is RNA-binding. Positions 402–418 (NVSTSNNSPSTDNDSIS) are enriched in low complexity. Serine 416 carries the phosphoserine modification. Aspartate 461 (for protease activity; shared with dimeric partner) is an active-site residue. The segment at 583 to 640 (NVHTSESTRKYPYPFIHRMLAHANAQTIRYSLKNNTITYFNESDVDWSSAIDYQCPDC) is integrase-type zinc finger-like. Positions 660–835 (NSYEPFQYLH…AGLDISTLLP (176 aa)) constitute an Integrase catalytic domain. Residues aspartate 671 and aspartate 736 each coordinate Mg(2+). 3 disordered regions span residues 956-1087 (SKAV…ETEK), 1092-1111 (RSPS…NIVP), and 1130-1187 (DLPL…DNET). A compositionally biased stretch (low complexity) spans 960–969 (SPTDSTPPST). Residues 1005–1015 (STPQISNIEST) show a composition bias toward polar residues. Residues 1038–1053 (ESSHASKSKDFRHSDS) show a composition bias toward basic and acidic residues. Polar residues-rich tracts occupy residues 1054-1082 (YSEN…QISD) and 1101-1111 (PENNSSHNIVP). The Bipartite nuclear localization signal motif lies at 1178-1212 (KKRSLEDNETEIKVSRDTWNTKNMRSLEPPRSKKR). A Reverse transcriptase Ty1/copia-type domain is found at 1338 to 1476 (NNYYITQLDI…DILGLEIKYQ (139 aa)). Residues aspartate 1346, aspartate 1427, aspartate 1428, aspartate 1610, glutamate 1652, and aspartate 1685 each contribute to the Mg(2+) site. One can recognise an RNase H Ty1/copia-type domain in the interval 1610–1752 (DASYGNQPYY…IKTFKLLTNK (143 aa)).

In terms of assembly, the capsid protein forms a homotrimer, from which the VLPs are assembled. The protease is a homodimer, whose active site consists of two apposed aspartic acid residues. Post-translationally, initially, virus-like particles (VLPs) are composed of the structural unprocessed proteins Gag and Gag-Pol, and also contain the host initiator methionine tRNA (tRNA(i)-Met) which serves as a primer for minus-strand DNA synthesis, and a dimer of genomic Ty RNA. Processing of the polyproteins occurs within the particle and proceeds by an ordered pathway, called maturation. First, the protease (PR) is released by autocatalytic cleavage of the Gag-Pol polyprotein yielding capsid protein p45 and a Pol-p154 precursor protein. This cleavage is a prerequisite for subsequent processing of Pol-p154 at the remaining sites to release the mature structural and catalytic proteins. Maturation takes place prior to the RT reaction and is required to produce transposition-competent VLPs.

The protein localises to the cytoplasm. It is found in the nucleus. The catalysed reaction is DNA(n) + a 2'-deoxyribonucleoside 5'-triphosphate = DNA(n+1) + diphosphate. It carries out the reaction Endonucleolytic cleavage to 5'-phosphomonoester.. Its function is as follows. Capsid protein (CA) is the structural component of the virus-like particle (VLP), forming the shell that encapsulates the retrotransposons dimeric RNA genome. The particles are assembled from trimer-clustered units and there are holes in the capsid shells that allow for the diffusion of macromolecules. CA also has nucleocapsid-like chaperone activity, promoting primer tRNA(i)-Met annealing to the multipartite primer-binding site (PBS), dimerization of Ty1 RNA and initiation of reverse transcription. Functionally, the aspartyl protease (PR) mediates the proteolytic cleavages of the Gag and Gag-Pol polyproteins after assembly of the VLP. In terms of biological role, reverse transcriptase/ribonuclease H (RT) is a multifunctional enzyme that catalyzes the conversion of the retro-elements RNA genome into dsDNA within the VLP. The enzyme displays a DNA polymerase activity that can copy either DNA or RNA templates, and a ribonuclease H (RNase H) activity that cleaves the RNA strand of RNA-DNA heteroduplexes during plus-strand synthesis and hydrolyzes RNA primers. The conversion leads to a linear dsDNA copy of the retrotransposon that includes long terminal repeats (LTRs) at both ends. Integrase (IN) targets the VLP to the nucleus, where a subparticle preintegration complex (PIC) containing at least integrase and the newly synthesized dsDNA copy of the retrotransposon must transit the nuclear membrane. Once in the nucleus, integrase performs the integration of the dsDNA into the host genome. The polypeptide is Transposon Ty1-GR1 Gag-Pol polyprotein (TY1B-GR1) (Saccharomyces cerevisiae (strain ATCC 204508 / S288c) (Baker's yeast)).